We begin with the raw amino-acid sequence, 337 residues long: Ribosomal RNA small subunit methyltransferase H (337 aa).

S-adenosyl-L-methionine is bound by residues 36–38, Asp56, Phe82, Asp100, and Gln107; that span reads GGH. The interval 315-337 is disordered; it reads LEERSKRIPNPQSPIPASQGDAQ.

It belongs to the methyltransferase superfamily. RsmH family.

The protein resides in the cytoplasm. It catalyses the reaction cytidine(1402) in 16S rRNA + S-adenosyl-L-methionine = N(4)-methylcytidine(1402) in 16S rRNA + S-adenosyl-L-homocysteine + H(+). Its function is as follows. Specifically methylates the N4 position of cytidine in position 1402 (C1402) of 16S rRNA. The chain is Ribosomal RNA small subunit methyltransferase H from Xanthomonas euvesicatoria pv. vesicatoria (strain 85-10) (Xanthomonas campestris pv. vesicatoria).